Reading from the N-terminus, the 309-residue chain is Porphobilinogen deaminase (309 aa).

An S-(dipyrrolylmethanemethyl)cysteine modification is found at Cys-241.

It belongs to the HMBS family. Monomer. Dipyrromethane is required as a cofactor.

It catalyses the reaction 4 porphobilinogen + H2O = hydroxymethylbilane + 4 NH4(+). It functions in the pathway porphyrin-containing compound metabolism; protoporphyrin-IX biosynthesis; coproporphyrinogen-III from 5-aminolevulinate: step 2/4. In terms of biological role, tetrapolymerization of the monopyrrole PBG into the hydroxymethylbilane pre-uroporphyrinogen in several discrete steps. The polypeptide is Porphobilinogen deaminase (Bacillus cereus (strain AH820)).